The following is a 659-amino-acid chain: 3-hydroxypropionyl-coenzyme A synthetase (659 aa).

Asp525 is a catalytic residue. Position 616 is an N6-acetyllysine (Lys616).

Belongs to the ATP-dependent AMP-binding enzyme family.

It carries out the reaction 3-hydroxypropanoate + ATP + CoA = 3-hydroxypropanoyl-CoA + AMP + diphosphate. In terms of biological role, plays a role in the autotrophic CO(2) fixation pathway. Activates 3-hydroxypropionate to its CoA ester. Can also activate propionate, and to a lesser extent acrylate, acetate and butyrate. This is 3-hydroxypropionyl-coenzyme A synthetase from Sulfurisphaera tokodaii (strain DSM 16993 / JCM 10545 / NBRC 100140 / 7) (Sulfolobus tokodaii).